We begin with the raw amino-acid sequence, 169 residues long: Crossover junction endodeoxyribonuclease RuvC (169 aa).

Active-site residues include Asp-11, Glu-71, and Asp-143. Positions 11, 71, and 143 each coordinate Mg(2+).

Belongs to the RuvC family. As to quaternary structure, homodimer which binds Holliday junction (HJ) DNA. The HJ becomes 2-fold symmetrical on binding to RuvC with unstacked arms; it has a different conformation from HJ DNA in complex with RuvA. In the full resolvosome a probable DNA-RuvA(4)-RuvB(12)-RuvC(2) complex forms which resolves the HJ. Mg(2+) is required as a cofactor.

The protein resides in the cytoplasm. The enzyme catalyses Endonucleolytic cleavage at a junction such as a reciprocal single-stranded crossover between two homologous DNA duplexes (Holliday junction).. Its function is as follows. The RuvA-RuvB-RuvC complex processes Holliday junction (HJ) DNA during genetic recombination and DNA repair. Endonuclease that resolves HJ intermediates. Cleaves cruciform DNA by making single-stranded nicks across the HJ at symmetrical positions within the homologous arms, yielding a 5'-phosphate and a 3'-hydroxyl group; requires a central core of homology in the junction. The consensus cleavage sequence is 5'-(A/T)TT(C/G)-3'. Cleavage occurs on the 3'-side of the TT dinucleotide at the point of strand exchange. HJ branch migration catalyzed by RuvA-RuvB allows RuvC to scan DNA until it finds its consensus sequence, where it cleaves and resolves the cruciform DNA. The chain is Crossover junction endodeoxyribonuclease RuvC from Bartonella henselae (strain ATCC 49882 / DSM 28221 / CCUG 30454 / Houston 1) (Rochalimaea henselae).